Here is a 175-residue protein sequence, read N- to C-terminus: Regenerating islet-derived protein 3-alpha (175 aa).

The signal sequence occupies residues 1-26 (MLPPMALPSVSWMLLSCLMLLSQVQG). A propeptide spanning residues 27 to 37 (EEPQRELPSAR) is cleaved from the precursor. 3 disulfide bridges follow: Cys-40–Cys-51, Cys-68–Cys-171, and Cys-146–Cys-163. The 126-residue stretch at 47–172 (YGSHCYALFL…CNVRLPYVCK (126 aa)) folds into the C-type lectin domain. Zn(2+) is bound by residues His-50 and His-107. The sufficient to activate EXTL3 stretch occupies residues 103-118 (WIGLHDPTQGTEPNGE). Residues 114–116 (EPN) carry the EPN motif. Residues Glu-121 and His-145 each coordinate Zn(2+).

Forms a hexameric membrane-permeabilizing oligomeric pore on membrane phospholipids. The hexamer is formed by three dimers related by helical symmetry. Forms filaments, filamentation traps pore complexes and limits damage to host cells. Interacts with EXTL3. Post-translationally, proteolytic processing by trypsin removes an inhibitory N-terminal propeptide and is essential for peptidoglycan binding and antibacterial activity. Expressed by keratinocytes. Highly expressed in epidermal keratinocytes of psoriasis patients (at protein level). Constitutively expressed in intestine. Low expression is found in healthy pancreas. Overexpressed during the acute phase of pancreatitis and in some patients with chronic pancreatitis.

Its subcellular location is the secreted. Lipopolysaccharide inhibits pore-forming activity, explaining why is bactericidal for Gram-positive but not Gram-negative bacteria. Bactericidal C-type lectin which acts exclusively against Gram-positive bacteria and mediates bacterial killing by binding to surface-exposed carbohydrate moieties of peptidoglycan. Binds membrane phospholipids and kills bacteria by forming a hexameric membrane-permeabilizing oligomeric pore. Functionally, acts as a hormone in response to different stimuli like anti-inflammatory signals, such as IL17A, or gut microbiome. Secreted by different cell types to activate its receptor EXTL3 and induce cell specific signaling pathways. Induced by IL17A in keratinocytes, regulates keratinocyte proliferation and differentiation after skin injury via activation of EXTL3-PI3K-AKT signaling pathway. In parallel, inhibits skin inflammation through the inhibition of inflammatory cytokines such as IL6 and TNF. In pancreas, is able to permealize beta-cells membrane and stimulate their proliferation. Its function is as follows. Has bacteriostatic activity. This Homo sapiens (Human) protein is Regenerating islet-derived protein 3-alpha.